We begin with the raw amino-acid sequence, 347 residues long: GMP reductase (347 aa).

NADP(+) is bound at residue 108–131 (TDFIKLSEILAKSEDLNFICIDIA). Residues glycine 181 and glycine 183 each contribute to the K(+) site. Cysteine 186 serves as the catalytic Thioimidate intermediate. Residue 216 to 239 (IIGDGGCSCAGDVAKAFGGGADFV) participates in NADP(+) binding.

Belongs to the IMPDH/GMPR family. GuaC type 1 subfamily. In terms of assembly, homotetramer.

The catalysed reaction is IMP + NH4(+) + NADP(+) = GMP + NADPH + 2 H(+). Its function is as follows. Catalyzes the irreversible NADPH-dependent deamination of GMP to IMP. It functions in the conversion of nucleobase, nucleoside and nucleotide derivatives of G to A nucleotides, and in maintaining the intracellular balance of A and G nucleotides. The polypeptide is GMP reductase (Shewanella pealeana (strain ATCC 700345 / ANG-SQ1)).